We begin with the raw amino-acid sequence, 90 residues long: Acylphosphatase (90 aa).

The 88-residue stretch at 3-90 folds into the Acylphosphatase-like domain; the sequence is RVLIKLTGKV…DIYLDFSIVR (88 aa). Catalysis depends on residues Arg18 and Asn36.

Belongs to the acylphosphatase family.

The catalysed reaction is an acyl phosphate + H2O = a carboxylate + phosphate + H(+). This is Acylphosphatase (acyP) from Shewanella oneidensis (strain ATCC 700550 / JCM 31522 / CIP 106686 / LMG 19005 / NCIMB 14063 / MR-1).